We begin with the raw amino-acid sequence, 133 residues long: Nucleoside diphosphate kinase (133 aa).

Residues Lys-9, Phe-57, Arg-85, Thr-91, Arg-102, and Asn-112 each contribute to the ATP site. His-115 functions as the Pros-phosphohistidine intermediate in the catalytic mechanism.

This sequence belongs to the NDK family. In terms of assembly, homotetramer. Mg(2+) serves as cofactor.

The protein resides in the cytoplasm. The catalysed reaction is a 2'-deoxyribonucleoside 5'-diphosphate + ATP = a 2'-deoxyribonucleoside 5'-triphosphate + ADP. It catalyses the reaction a ribonucleoside 5'-diphosphate + ATP = a ribonucleoside 5'-triphosphate + ADP. In terms of biological role, major role in the synthesis of nucleoside triphosphates other than ATP. The ATP gamma phosphate is transferred to the NDP beta phosphate via a ping-pong mechanism, using a phosphorylated active-site intermediate. This Rubrobacter xylanophilus (strain DSM 9941 / JCM 11954 / NBRC 16129 / PRD-1) protein is Nucleoside diphosphate kinase.